We begin with the raw amino-acid sequence, 143 residues long: 18 kDa heat shock protein (143 aa).

One can recognise a sHSP domain in the interval 23–135; the sequence is TWSRPTAMPM…KRRRVKVGQG (113 aa).

Belongs to the small heat shock protein (HSP20) family.

The chain is 18 kDa heat shock protein (hsp18) from Streptomyces albus G.